Consider the following 94-residue polypeptide: Large ribosomal subunit protein eL42 (94 aa).

Zn(2+) is bound by residues cysteine 11, cysteine 14, cysteine 71, and cysteine 74. Residues 11–74 (CPFCKRHTIH…LDLRFRCTVC (64 aa)) form a C4-type zinc finger.

The protein belongs to the eukaryotic ribosomal protein eL42 family. In terms of assembly, part of the 50S ribosomal subunit. The cofactor is Zn(2+).

Functionally, binds to the 23S rRNA. This is Large ribosomal subunit protein eL42 from Thermococcus kodakarensis (strain ATCC BAA-918 / JCM 12380 / KOD1) (Pyrococcus kodakaraensis (strain KOD1)).